Here is a 120-residue protein sequence, read N- to C-terminus: Glycine cleavage system H protein (120 aa).

One can recognise a Lipoyl-binding domain in the interval 17–99; that stretch reads VATVGITEHA…QGAAWFFKLK (83 aa). Position 58 is an N6-lipoyllysine (K58).

Belongs to the GcvH family. The glycine cleavage system is composed of four proteins: P, T, L and H. It depends on (R)-lipoate as a cofactor.

In terms of biological role, the glycine cleavage system catalyzes the degradation of glycine. The H protein shuttles the methylamine group of glycine from the P protein to the T protein. This is Glycine cleavage system H protein from Sinorhizobium medicae (strain WSM419) (Ensifer medicae).